We begin with the raw amino-acid sequence, 388 residues long: Flavin-dependent monooxygenase (388 aa).

FAD is bound by residues 26–27 (PV) and 45–48 (YERD). Arginine 54 is an NADPH binding site. Residues aspartate 61, arginine 117, and leucine 139 each contribute to the FAD site. 2 residues coordinate substrate: glutamine 192 and arginine 213. Residues aspartate 311 and 321–324 (GQGV) contribute to the FAD site.

It belongs to the aromatic-ring hydroxylase family. TetX subfamily. In terms of assembly, monomer. Requires FAD as cofactor.

It is found in the cytoplasm. The catalysed reaction is a tetracycline + NADPH + O2 + H(+) = an 11a-hydroxytetracycline + NADP(+) + H2O. It carries out the reaction tetracycline + NADPH + O2 + H(+) = 11a-hydroxytetracycline + NADP(+) + H2O. It catalyses the reaction tigecycline + NADPH + O2 + H(+) = 11a-hydroxytigecycline + NADP(+) + H2O. The enzyme catalyses oxytetracycline + NADPH + O2 + H(+) = 11a-hydroxy-oxytetracycline + NADP(+) + H2O. Anhydrotetracycline, a poor substrate, prevents tetracycline degradation in vitro. Functionally, an FAD-requiring monooxygenase active on tetracycline antibiotic derivatives, which leads to their inactivation. Hydroxylates carbon 11a of oxytetracycline and tigecycline. Acts on many tetracycline analogs (chlorotetracycline, demeclocycline, doxycycline, minocycline, oxytetracyclinee), probably by monooxygenization. Tigecycline, a new generation tetracycline antibiotic, is rendered less effective against E.coli by this monooxygenation, is much weaker at inhibiting translation in vitro and binds Mg(2+) considerably less well. Expression in E.coli BW25113 reduces its growth rate about 5%. The reaction probably proceeds by FAD reduction by NADPH and, second, hydroxylation of antibiotic in a ping-pong mechanism. Degrades chlortetracycline, probably by monooxygenation. Slowly oxidizes anhydrotetracycline, the final substrate in tetracycline biosynthesis. The protein is Flavin-dependent monooxygenase of Bacteroides thetaiotaomicron.